The sequence spans 870 residues: Eukaryotic translation initiation factor 3 subunit C (870 aa).

The interval 1 to 92 (MSRFFRGDSS…GVKVVKSAKN (92 aa)) is disordered. The span at 14–54 (SSDEEEDLYSDDEEVQEQPEEESEEDDSEEDDDDDDSDSSS) shows a compositional bias: acidic residues. In terms of domain architecture, PCI spans 608–782 (FHMHINLELL…SSIIFRKGVE (175 aa)). Positions 807-870 (TLETRTQGTA…ALGAAVGSRA (64 aa)) are disordered. The span at 824 to 844 (GRGGRGGNRGGRGGNRGGRGG) shows a compositional bias: gly residues.

It belongs to the eIF-3 subunit C family. In terms of assembly, component of the eukaryotic translation initiation factor 3 (eIF-3) complex.

The protein resides in the cytoplasm. Component of the eukaryotic translation initiation factor 3 (eIF-3) complex, which is involved in protein synthesis of a specialized repertoire of mRNAs and, together with other initiation factors, stimulates binding of mRNA and methionyl-tRNAi to the 40S ribosome. The eIF-3 complex specifically targets and initiates translation of a subset of mRNAs involved in cell proliferation. This Sclerotinia sclerotiorum (strain ATCC 18683 / 1980 / Ss-1) (White mold) protein is Eukaryotic translation initiation factor 3 subunit C (nip1).